The sequence spans 269 residues: MATH domain and coiled-coil domain-containing protein At2g01790 (269 aa).

Residues 6 to 134 (AVKKLWVINN…NGEVDIVAEV (129 aa)) form the MATH domain. The stretch at 228-269 (KLDWLEKKLKETGKSRLQEIEEDLKDLKVKCADMDALLEFLR) forms a coiled coil.

In Arabidopsis thaliana (Mouse-ear cress), this protein is MATH domain and coiled-coil domain-containing protein At2g01790.